The sequence spans 239 residues: Small ribosomal subunit protein uS3 (239 aa).

In terms of domain architecture, KH type-2 spans 39 to 109 (IRAMIQEIPE…KVQIKIKEVK (71 aa)). The interval 219-239 (GALLKKQRRPRTEKPAQAGRQ) is disordered.

It belongs to the universal ribosomal protein uS3 family. As to quaternary structure, part of the 30S ribosomal subunit. Forms a tight complex with proteins S10 and S14.

Binds the lower part of the 30S subunit head. Binds mRNA in the 70S ribosome, positioning it for translation. The protein is Small ribosomal subunit protein uS3 of Treponema denticola (strain ATCC 35405 / DSM 14222 / CIP 103919 / JCM 8153 / KCTC 15104).